Here is a 551-residue protein sequence, read N- to C-terminus: Alkaline/neutral invertase CINV1 (551 aa).

Position 1 is an N-acetylmethionine (M1). S11, S14, S44, and S61 each carry phosphoserine. A disordered region spans residues 50-74; sequence TGYSRHDGIHDSPRGRSVLDTPLSS. Over residues 53-63 the composition is skewed to basic and acidic residues; that stretch reads SRHDGIHDSPR. A Phosphothreonine modification is found at T70. S547 carries the post-translational modification Phosphoserine.

Belongs to the glycosyl hydrolase 100 family. In terms of assembly, forms homohexamers. Interacts with PIP5K9. Interaction with PIP5K9 represses CINV1 activity. Interacts with GRF1, GRF2, GRF3, GRF4, GRF5, GRF6, GRF7, GRF8 and GRF10; these interactions are dependent of the phosphorylation at Ser-547. Phosphorylated at Ser-547 by CPK3 and CPK21. Expressed in radicle, hypocotyls, root tips and vascular cylinder, leaf vasculature, shoot stipules, trichomes, stem, stigma apex and base of siliques.

The protein resides in the cytoplasm. It is found in the cytosol. The protein localises to the nucleus. The enzyme catalyses Hydrolysis of terminal non-reducing beta-D-fructofuranoside residues in beta-D-fructofuranosides.. Functionally, cytosolic invertase that specifically cleaves sucrose into glucose and fructose and is involved in the regulation of multiple tissue development including primary root elongation, root hair growth, leaf and silique development, and floral transition. Is involved in osmotic stress-induced inhibition on lateral root growth by controlling the concentration of hexose in cells. May regulate sugar-mediated root development by controlling sucrose catabolism in root cells. Contributes to carbon partitioning and cellulose biosynthesis in seedlings. This chain is Alkaline/neutral invertase CINV1, found in Arabidopsis thaliana (Mouse-ear cress).